A 473-amino-acid polypeptide reads, in one-letter code: H(+)/Cl(-) exchange transporter ClcA (473 aa).

Topologically, residues 1–32 are cytoplasmic; it reads MKTDNSTFLAQQIVRLRRRDQIRRLMQRDKTP. The chain crosses the membrane as a helical span at residues 33–69; the sequence is LAILFMAAVVGTLTGLVGVAFEKAVSWVQNMRIGALV. Residues 70–76 are Periplasmic-facing; that stretch reads QVADHAF. Residues 77 to 100 traverse the membrane as a helical segment; the sequence is LLWPLAFILSALLAMVGYFLVRKF. A Selectivity filter part_1 motif is present at residues 106–110; it reads GSGIP. Residue Ser107 coordinates chloride. The segment at residues 109–116 is an intramembrane region (helical); the sequence is IPEIEGAL. Residues 117–123 lie on the Cytoplasmic side of the membrane; it reads EELRPVR. A run of 2 helical transmembrane segments spans residues 124–141 and 148–166; these read WWRV…TLGA and EGPT…LDVF. Positions 146–150 match the Selectivity filter part_2 motif; that stretch reads GREGP. Over 167–176 the chain is Cytoplasmic; it reads RMRSAEARHT. 2 intramembrane regions (helical) span residues 177 to 189 and 193 to 201; these read LLAT…LSAA and PLAGILFII. The Cytoplasmic segment spans residues 202–214; the sequence is EEMRPQFRYNLIS. Residues 215–232 form a helical membrane-spanning segment; the sequence is IKAVFTGVIMSSIVFRIF. Residues 233 to 252 are Periplasmic-facing; the sequence is NGEAPIIEVGKLSDAPVNTL. A helical membrane pass occupies residues 253-281; the sequence is WLYLILGIIFGCVGPVFNSLVLRTQDMFQ. Residues 282 to 287 are Cytoplasmic-facing; sequence RFHGGE. The chain crosses the membrane as a helical span at residues 288 to 309; that stretch reads IKKWVLMGGAIGGLCGILGLIE. At 310–329 the chain is on the periplasmic side; it reads PEAAGGGFNLIPIAAAGNFS. 2 helical membrane-spanning segments follow: residues 330 to 349 and 355 to 376; these read VGLL…LCFS and GIFA…MAAA. A Selectivity filter part_3 motif is present at residues 355 to 359; it reads GIFAP. 2 residues coordinate chloride: Ile356 and Phe357. Over 377–386 the chain is Periplasmic; it reads VLFPQYHLEA. The segment at residues 387 to 401 is an intramembrane region (helical); it reads GTFAIAGMGALMAAS. The note=Loop between two helices intramembrane region spans 402–404; sequence VRA. Residues 405–416 constitute an intramembrane region (helical); it reads PLTGIVLVLEMT. Positions 417-421 form an intramembrane region, note=Loop between two helices; that stretch reads DNYQL. The chain crosses the membrane as a helical span at residues 422-438; it reads ILPMIITCLGATLLAQF. Topologically, residues 439 to 473 are cytoplasmic; it reads LGGKPLYSTILARTLAKQDAEQAAKNQNAPAGENT. Tyr445 contacts chloride.

It belongs to the chloride channel (TC 2.A.49) family. ClcA subfamily. In terms of assembly, homodimer.

Its subcellular location is the cell inner membrane. It catalyses the reaction 2 chloride(in) + H(+)(out) = 2 chloride(out) + H(+)(in). Functionally, proton-coupled chloride transporter. Functions as antiport system and exchanges two chloride ions for 1 proton. Probably acts as an electrical shunt for an outwardly-directed proton pump that is linked to amino acid decarboxylation, as part of the extreme acid resistance (XAR) response. The protein is H(+)/Cl(-) exchange transporter ClcA of Salmonella schwarzengrund (strain CVM19633).